A 773-amino-acid polypeptide reads, in one-letter code: Preaspterpenacid I synthase sttA (773 aa).

The tract at residues 4–359 (ISDVMKHCVP…RYHRTDLATT (356 aa)) is sesterterpenoid synthase. D105 provides a ligand contact to Mg(2+). D105 lines the substrate pocket. Positions 211 to 214 (RVNE) are substrate. N255 is a substrate binding site. Substrate stretches follow at residues 259-263 (SFPKE) and 350-351 (RY). Positions 360–769 (AEDRATLIGK…RMMLLGMGPK (410 aa)) are geranylfarnesyl diphosphate synthase. The tract at residues 423–447 (AFKKRNSRNGKQNGTEGSKSTFTNG) is disordered. A compositionally biased stretch (polar residues) spans 431–447 (NGKQNGTEGSKSTFTNG). Residues K493, R496, and H525 each contribute to the isopentenyl diphosphate site. Mg(2+)-binding residues include D532 and D536. Residue R541 coordinates dimethylallyl diphosphate. R542 is an isopentenyl diphosphate binding site. Positions 614, 615, 652, 659, and 669 each coordinate dimethylallyl diphosphate.

It in the N-terminal section; belongs to the terpene synthase family. The protein in the C-terminal section; belongs to the FPP/GGPP synthase family.

It carries out the reaction 4 isopentenyl diphosphate + dimethylallyl diphosphate = (2E,6E,10E,14E)-geranylfarnesyl diphosphate + 4 diphosphate. The enzyme catalyses (2E,6E,10E,14E)-geranylfarnesyl diphosphate + H2O = preaspterpenacid acid I + diphosphate. It participates in secondary metabolite biosynthesis; terpenoid biosynthesis. In terms of biological role, sesterterpenoid synthase; part of the gene cluster that mediates the biosynthesis of aspterpenacids. Performs both prenyl transferase and terpene cyclase activity, converting isopentenyl diphosphate and dimethylallyl diphosphate into geranylfarnesyl diphosphate (GFPP) and then converting GFPP into preaspterpenacid I. C22-oxidative modification of preaspterpenacid I by the cytochrome P450 monooxygenase sttB then leads to preaspterpenacid II. It has still to be determined how preaspterpenacid II is further modified to produce aspterpenacids. This is Preaspterpenacid I synthase sttA from Aspergillus terreus (strain NIH 2624 / FGSC A1156).